A 290-amino-acid polypeptide reads, in one-letter code: 4-hydroxybenzoate octaprenyltransferase (290 aa).

The next 6 helical transmembrane spans lie at 41 to 61, 89 to 109, 133 to 153, 158 to 178, 202 to 224, and 269 to 289; these read WPLL…GCAM, WEAV…IQPL, FFAI…PMAF, DTVP…SVAY, FGRF…YVWI, and WLGG…GTAG.

It belongs to the UbiA prenyltransferase family. Mg(2+) serves as cofactor.

The protein resides in the cell inner membrane. The enzyme catalyses all-trans-octaprenyl diphosphate + 4-hydroxybenzoate = 4-hydroxy-3-(all-trans-octaprenyl)benzoate + diphosphate. The protein operates within cofactor biosynthesis; ubiquinone biosynthesis. Functionally, catalyzes the prenylation of para-hydroxybenzoate (PHB) with an all-trans polyprenyl group. Mediates the second step in the final reaction sequence of ubiquinone-8 (UQ-8) biosynthesis, which is the condensation of the polyisoprenoid side chain with PHB, generating the first membrane-bound Q intermediate 3-octaprenyl-4-hydroxybenzoate. This Burkholderia ambifaria (strain ATCC BAA-244 / DSM 16087 / CCUG 44356 / LMG 19182 / AMMD) (Burkholderia cepacia (strain AMMD)) protein is 4-hydroxybenzoate octaprenyltransferase.